The chain runs to 264 residues: S-adenosylmethionine decarboxylase proenzyme (264 aa).

S112 (schiff-base intermediate with substrate; via pyruvic acid) is an active-site residue. S112 carries the pyruvic acid (Ser); by autocatalysis modification. Residue H117 is the Proton acceptor; for processing activity of the active site. C140 serves as the catalytic Proton donor; for catalytic activity.

Belongs to the prokaryotic AdoMetDC family. Type 2 subfamily. As to quaternary structure, heterooctamer of four alpha and four beta chains arranged as a tetramer of alpha/beta heterodimers. Pyruvate serves as cofactor. Is synthesized initially as an inactive proenzyme. Formation of the active enzyme involves a self-maturation process in which the active site pyruvoyl group is generated from an internal serine residue via an autocatalytic post-translational modification. Two non-identical subunits are generated from the proenzyme in this reaction, and the pyruvate is formed at the N-terminus of the alpha chain, which is derived from the carboxyl end of the proenzyme. The post-translation cleavage follows an unusual pathway, termed non-hydrolytic serinolysis, in which the side chain hydroxyl group of the serine supplies its oxygen atom to form the C-terminus of the beta chain, while the remainder of the serine residue undergoes an oxidative deamination to produce ammonia and the pyruvoyl group blocking the N-terminus of the alpha chain.

It carries out the reaction S-adenosyl-L-methionine + H(+) = S-adenosyl 3-(methylsulfanyl)propylamine + CO2. It participates in amine and polyamine biosynthesis; S-adenosylmethioninamine biosynthesis; S-adenosylmethioninamine from S-adenosyl-L-methionine: step 1/1. Functionally, catalyzes the decarboxylation of S-adenosylmethionine to S-adenosylmethioninamine (dcAdoMet), the propylamine donor required for the synthesis of the polyamines spermine and spermidine from the diamine putrescine. This chain is S-adenosylmethionine decarboxylase proenzyme, found in Hamiltonella defensa subsp. Acyrthosiphon pisum (strain 5AT).